We begin with the raw amino-acid sequence, 158 residues long: Crossover junction endodeoxyribonuclease RuvC (158 aa).

Catalysis depends on residues D7, E66, and D139. Residues D7, E66, and D139 each coordinate Mg(2+).

It belongs to the RuvC family. As to quaternary structure, homodimer which binds Holliday junction (HJ) DNA. The HJ becomes 2-fold symmetrical on binding to RuvC with unstacked arms; it has a different conformation from HJ DNA in complex with RuvA. In the full resolvosome a probable DNA-RuvA(4)-RuvB(12)-RuvC(2) complex forms which resolves the HJ. It depends on Mg(2+) as a cofactor.

It localises to the cytoplasm. The catalysed reaction is Endonucleolytic cleavage at a junction such as a reciprocal single-stranded crossover between two homologous DNA duplexes (Holliday junction).. Functionally, the RuvA-RuvB-RuvC complex processes Holliday junction (HJ) DNA during genetic recombination and DNA repair. Endonuclease that resolves HJ intermediates. Cleaves cruciform DNA by making single-stranded nicks across the HJ at symmetrical positions within the homologous arms, yielding a 5'-phosphate and a 3'-hydroxyl group; requires a central core of homology in the junction. The consensus cleavage sequence is 5'-(A/T)TT(C/G)-3'. Cleavage occurs on the 3'-side of the TT dinucleotide at the point of strand exchange. HJ branch migration catalyzed by RuvA-RuvB allows RuvC to scan DNA until it finds its consensus sequence, where it cleaves and resolves the cruciform DNA. The polypeptide is Crossover junction endodeoxyribonuclease RuvC (Campylobacter jejuni subsp. jejuni serotype O:6 (strain 81116 / NCTC 11828)).